The sequence spans 400 residues: Nucleoside permease NupC (400 aa).

At 1–3 (MDR) the chain is on the cytoplasmic side. The helical transmembrane segment at 4–24 (VLHFVLALAVVAILALLVSSD) threads the bilayer. Residues 25 to 36 (RKKIRIRYVIQL) lie on the Periplasmic side of the membrane. Residues 37–57 (LVIEVLLAWFFLNSDVGLGFV) form a helical membrane-spanning segment. The Cytoplasmic segment spans residues 58–86 (KGFSEMFEKLLGFANEGTNFVFGSMNDQG). Residues 87 to 107 (LAFFFLKVLCPIVFISALIGI) form a helical membrane-spanning segment. Over 108-168 (LQHIRVLPVI…GKISRNRMYT (61 aa)) the chain is Periplasmic. Residues 169–189 (MAATAMSTVSMSIVGAYMTML) traverse the membrane as a helical segment. Residues 190–192 (EPK) are Cytoplasmic-facing. A helical transmembrane segment spans residues 193 to 213 (YVVAALVLNMFSTFIVLSLIN). Topologically, residues 214 to 250 (PYRVDASEENIQMSNLHEGQSFFEMLGEYILAGFKVA) are periplasmic. Residues 251–271 (IIVAAMLIGFIALIAALNALF) form a helical membrane-spanning segment. Residues 272-281 (ATVTGWFGYS) lie on the Cytoplasmic side of the membrane. A helical transmembrane segment spans residues 282-302 (ISFQGILGYIFYPIAWVMGVP). The Periplasmic segment spans residues 303–341 (SSEALQVGSIMATKLVSNEFVAMMDLQKIASTLSPRAEG). The helical transmembrane segment at 342 to 362 (IISVFLVSFANFSSIGIIAGA) threads the bilayer. The Cytoplasmic portion of the chain corresponds to 363–378 (VKGLNEEQGNVVSRFG). A helical transmembrane segment spans residues 379–399 (LKLVYGSTLVSVLSASIAALV). A topological domain (periplasmic) is located at residue Leu400.

The protein belongs to the concentrative nucleoside transporter (CNT) (TC 2.A.41) family.

It localises to the cell inner membrane. The enzyme catalyses adenosine(in) + H(+)(in) = adenosine(out) + H(+)(out). It carries out the reaction uridine(in) + H(+)(in) = uridine(out) + H(+)(out). The catalysed reaction is thymidine(in) + H(+)(in) = thymidine(out) + H(+)(out). It catalyses the reaction cytidine(in) + H(+)(in) = cytidine(out) + H(+)(out). The enzyme catalyses 2'-deoxycytidine(in) + H(+)(in) = 2'-deoxycytidine(out) + H(+)(out). Transport is inhibited by the proton uncoupler dinitrophenol. Inhibited by the nucleoside antibiotic showdomycin. In terms of biological role, nucleoside transport protein that can transport adenosine, uridine, thymidine, cytidine and deoxycytidine. Shows weak activity with inosine and xanthosine. Transport is driven by a proton motive force. Does not transport guanosine, deoxyguanosine, hypoxanthine or uracil. Also shows activity with the chemotherapeutic drugs 3'-azido-3'-deoxythymidine (AZT), 2',3'- dideoxycytidine (ddC) and 2'-deoxy-2',2'-difluorocytidine (gemcitabine). The chain is Nucleoside permease NupC from Escherichia coli (strain K12).